The sequence spans 398 residues: 8-amino-7-oxononanoate synthase (398 aa).

Residues arginine 22 and arginine 29 each contribute to the substrate site. A pyridoxal 5'-phosphate-binding site is contributed by 109-110; the sequence is GW. Residue histidine 141 participates in substrate binding. Residues serine 189, 214-217, and 242-245 each bind pyridoxal 5'-phosphate; these read DEAH and TFSK. At lysine 245 the chain carries N6-(pyridoxal phosphate)lysine. Residue threonine 359 participates in substrate binding.

It belongs to the class-II pyridoxal-phosphate-dependent aminotransferase family. BioF subfamily. As to quaternary structure, homodimer. The cofactor is pyridoxal 5'-phosphate.

It carries out the reaction 6-carboxyhexanoyl-[ACP] + L-alanine + H(+) = (8S)-8-amino-7-oxononanoate + holo-[ACP] + CO2. Its pathway is cofactor biosynthesis; biotin biosynthesis. In terms of biological role, catalyzes the decarboxylative condensation of pimeloyl-[acyl-carrier protein] and L-alanine to produce 8-amino-7-oxononanoate (AON), [acyl-carrier protein], and carbon dioxide. This chain is 8-amino-7-oxononanoate synthase, found in Gluconacetobacter diazotrophicus (strain ATCC 49037 / DSM 5601 / CCUG 37298 / CIP 103539 / LMG 7603 / PAl5).